A 139-amino-acid chain; its full sequence is MLMPKRVKYRKVQRGRMKGDAQRGTTISFGSYGLKALEPAWITNRQIEAARIAMNRYMKRDGKIWIRIFPDKPVTKKAAETRMGSGKGSPEFWVSVVKPGRIMFEADGVPLDVATEAFRLAAKKLPIKTKFIVRPDLEG.

It belongs to the universal ribosomal protein uL16 family. Part of the 50S ribosomal subunit.

Functionally, binds 23S rRNA and is also seen to make contacts with the A and possibly P site tRNAs. The chain is Large ribosomal subunit protein uL16 from Chlorobium phaeobacteroides (strain BS1).